The following is a 317-amino-acid chain: Putative S-adenosyl-L-methionine-dependent methyltransferase MSMEG_0093 (317 aa).

S-adenosyl-L-methionine-binding positions include Asp-134 and 163-164; that span reads DL.

Belongs to the UPF0677 family.

Functionally, exhibits S-adenosyl-L-methionine-dependent methyltransferase activity. In Mycolicibacterium smegmatis (strain ATCC 700084 / mc(2)155) (Mycobacterium smegmatis), this protein is Putative S-adenosyl-L-methionine-dependent methyltransferase MSMEG_0093.